The primary structure comprises 510 residues: MLWIKNLARISQTTSSSVGNVFRNPESYTLSSRFCTALQKQQVTDTVQAKEDVVNALEPQRYDGLAPTKEGEKPRVLVLGSGWAGCRVLKGIDTSIYDVVCVSPRNHMVFTPLLASTCVGTLEFRSVAEPISRIQPAISREPGSYYFLANCSKLDADNHEVHCETVTEGSSTLKPWKFKIAYDKLVLACGAEASTFGINGVLENAIFLREVHHAQEIRRKLLLNLMLSEVPGIGEDEKKRLLHCVVVGGGPTGVEFSGELSDFIMKDVRQRYSHVKDDIRVTLIEARDILSSFDDRLRHYAIKQLNKSGVKLVRGIVKEVKPQKLILDDGTEVPYGPLVWSTGVGPSSFVRSLDFPKDPGGRIGIDEWMRVPSVQDVFAIGDCSGYLESTGKSTLPALAQVAEREGKYLANLFNVMGKAGGGRANSAKEMELGEPFVYKHLGSMATIGRYKALVDLRESKEGKGISMAGFLSWFIWRSAYLTRVVSWRNRFYVAINWLTTFVFGRDISRI.

A mitochondrion-targeting transit peptide spans Met-1–Gln-48. An FAD-binding site is contributed by Arg-75–Arg-105. Position 242 to 278 (Leu-242 to Asp-278) interacts with NAD(+). The Microbody targeting signal signature appears at Phe-501–Ile-510.

Belongs to the NADH dehydrogenase family. It depends on FAD as a cofactor. Expressed in seedlings, cotyledons, young leaves, stems and flowers and, to a lower extent, in roots and buds.

Its subcellular location is the mitochondrion inner membrane. It localises to the peroxisome. It carries out the reaction a quinone + NADH + H(+) = a quinol + NAD(+). The enzyme catalyses a ubiquinone + NADH + H(+) = a ubiquinol + NAD(+). In terms of biological role, alternative NADH-ubiquinone oxidoreductase which catalyzes the oxidation of mitochondrial NADH does not translocate protons across the inner mitochondrial membrane. This Arabidopsis thaliana (Mouse-ear cress) protein is Internal alternative NAD(P)H-ubiquinone oxidoreductase A1, mitochondrial (NDA1).